Consider the following 68-residue polypeptide: Large ribosomal subunit protein bL32 (68 aa).

Positions 1–21 (MAVQQNKVSKSRRNNRRAHDS) are disordered.

It belongs to the bacterial ribosomal protein bL32 family.

The protein is Large ribosomal subunit protein bL32 of Roseobacter denitrificans (strain ATCC 33942 / OCh 114) (Erythrobacter sp. (strain OCh 114)).